The following is a 221-amino-acid chain: Phosphoribosylformylglycinamidine synthase subunit PurQ (221 aa).

Positions 5–221 constitute a Glutamine amidotransferase type-1 domain; it reads TVGIVVFPGS…LYTLRSLITQ (217 aa). The Nucleophile role is filled by Cys-89. Catalysis depends on residues His-197 and Glu-199.

Part of the FGAM synthase complex composed of 1 PurL, 1 PurQ and 2 PurS subunits.

The protein localises to the cytoplasm. It carries out the reaction N(2)-formyl-N(1)-(5-phospho-beta-D-ribosyl)glycinamide + L-glutamine + ATP + H2O = 2-formamido-N(1)-(5-O-phospho-beta-D-ribosyl)acetamidine + L-glutamate + ADP + phosphate + H(+). The enzyme catalyses L-glutamine + H2O = L-glutamate + NH4(+). It participates in purine metabolism; IMP biosynthesis via de novo pathway; 5-amino-1-(5-phospho-D-ribosyl)imidazole from N(2)-formyl-N(1)-(5-phospho-D-ribosyl)glycinamide: step 1/2. Part of the phosphoribosylformylglycinamidine synthase complex involved in the purines biosynthetic pathway. Catalyzes the ATP-dependent conversion of formylglycinamide ribonucleotide (FGAR) and glutamine to yield formylglycinamidine ribonucleotide (FGAM) and glutamate. The FGAM synthase complex is composed of three subunits. PurQ produces an ammonia molecule by converting glutamine to glutamate. PurL transfers the ammonia molecule to FGAR to form FGAM in an ATP-dependent manner. PurS interacts with PurQ and PurL and is thought to assist in the transfer of the ammonia molecule from PurQ to PurL. In Prochlorococcus marinus subsp. pastoris (strain CCMP1986 / NIES-2087 / MED4), this protein is Phosphoribosylformylglycinamidine synthase subunit PurQ.